Reading from the N-terminus, the 314-residue chain is Olfactory receptor 9A1 (314 aa).

The Extracellular portion of the chain corresponds to 1–24; the sequence is MLGNYSSATEFFLLGFPGSQEVCR. The N-linked (GlcNAc...) asparagine glycan is linked to Asn-4. Residues 25-45 form a helical membrane-spanning segment; that stretch reads ILFATFFLLYAVTVMGNVVII. The Cytoplasmic portion of the chain corresponds to 46-64; it reads ITVCVDKCLQSPIYFFLGH. The chain crosses the membrane as a helical span at residues 65-85; that stretch reads LCVLEILITSTAVPFMLWGLL. Topologically, residues 86-99 are extracellular; the sequence is LPSTQIMSLTACAA. Cys-97 and Cys-179 form a disulfide bridge. The chain crosses the membrane as a helical span at residues 100 to 120; it reads QLYLYLSLGTLELALMGVMAV. Topologically, residues 121-140 are cytoplasmic; that stretch reads DRYVAVCNPLRYNIIMNSST. A helical transmembrane segment spans residues 141 to 161; sequence FIWVIIVSWVLGFLSEIWPVY. At 162–196 the chain is on the extracellular side; the sequence is ATFQLTFCKSSVLDHFYCDRGQLLKVSCEDTLFRE. A helical transmembrane segment spans residues 197-217; sequence FILFLMAVFIIIGSLIPTIVS. At 218-239 the chain is on the cytoplasmic side; the sequence is YTYIISTNLKIPSASGWRKSFS. The chain crosses the membrane as a helical span at residues 240-260; the sequence is TCASHFTYVVIGYGSCLFLYV. The Extracellular segment spans residues 261-271; it reads KPKQTQAAEYN. The chain crosses the membrane as a helical span at residues 272–292; sequence RVVSLLVLVVTPFLNPFIFTL. Residues 293-314 lie on the Cytoplasmic side of the membrane; the sequence is RNDKFIQAFGDGMKHCYKLLKN.

This sequence belongs to the G-protein coupled receptor 1 family.

It localises to the cell membrane. Functionally, odorant receptor. The chain is Olfactory receptor 9A1 (OR9A1P) from Homo sapiens (Human).